The chain runs to 352 residues: 4-hydroxy-3-methylbut-2-en-1-yl diphosphate synthase (flavodoxin) (352 aa).

Residues Cys-262, Cys-265, Cys-297, and Glu-304 each contribute to the [4Fe-4S] cluster site.

It belongs to the IspG family. [4Fe-4S] cluster is required as a cofactor.

The enzyme catalyses (2E)-4-hydroxy-3-methylbut-2-enyl diphosphate + oxidized [flavodoxin] + H2O + 2 H(+) = 2-C-methyl-D-erythritol 2,4-cyclic diphosphate + reduced [flavodoxin]. The protein operates within isoprenoid biosynthesis; isopentenyl diphosphate biosynthesis via DXP pathway; isopentenyl diphosphate from 1-deoxy-D-xylulose 5-phosphate: step 5/6. Functionally, converts 2C-methyl-D-erythritol 2,4-cyclodiphosphate (ME-2,4cPP) into 1-hydroxy-2-methyl-2-(E)-butenyl 4-diphosphate. The protein is 4-hydroxy-3-methylbut-2-en-1-yl diphosphate synthase (flavodoxin) of Campylobacter concisus (strain 13826).